Consider the following 711-residue polypeptide: Polyribonucleotide nucleotidyltransferase (711 aa).

2 residues coordinate Mg(2+): Asp-486 and Asp-492. Residues Pro-553–Ile-612 form the KH domain. The region spanning Gly-622–Lys-690 is the S1 motif domain. A disordered region spans residues Glu-691–Glu-711. The segment covering Ala-699–Glu-711 has biased composition (low complexity).

This sequence belongs to the polyribonucleotide nucleotidyltransferase family. As to quaternary structure, component of the RNA degradosome, which is a multiprotein complex involved in RNA processing and mRNA degradation. Mg(2+) is required as a cofactor.

The protein resides in the cytoplasm. The enzyme catalyses RNA(n+1) + phosphate = RNA(n) + a ribonucleoside 5'-diphosphate. Involved in mRNA degradation. Catalyzes the phosphorolysis of single-stranded polyribonucleotides processively in the 3'- to 5'-direction. The chain is Polyribonucleotide nucleotidyltransferase from Klebsiella pneumoniae (strain 342).